Reading from the N-terminus, the 226-residue chain is Hand transcription factor 1 (226 aa).

Over residues 1–15 (MVKSTTAGNNAVSSL) the composition is skewed to polar residues. Residues 1–35 (MVKSTTAGNNAVSSLESTDSKKSRKEKSREKEHRR) form a disordered region. Residues 23–36 (SRKEKSREKEHRRA) form a basic motif region. Residues 23 to 77 (SRKEKSREKEHRRAQCINSAFEILQQHIPYLKSEERKSLPKIKTLRLAMQYIDHL) enclose the bHLH domain. The interval 37–77 (QCINSAFEILQQHIPYLKSEERKSLPKIKTLRLAMQYIDHL) is helix-loop-helix motif.

The protein localises to the nucleus. Its function is as follows. Probable transcription factor which regulates early embryonic myogenesis, in cooperation with transcription factors unc-120 and hlh-1. Involved in controlling the number and position of somatic gonadal precursor cells (SGPs) in the gonadal primordium, and embryonic body shape. This Caenorhabditis elegans protein is Hand transcription factor 1.